The following is a 158-amino-acid chain: MSKKSKKPENQICANKKARHEYFIEETFEAGLSLQGWEVKAIRAGKMTITEAYIIFRNNEAFLFGAHIQPLLSSSTHVSPDSIRTRKLLLNRREIEKLFGAVNQKGYACVPLSCYWKNSLVKCQIGLALGKKQHDKRKTLKDRDWERDKQRGFKKDLD.

The disordered stretch occupies residues aspartate 135 to aspartate 158. Residues lysine 141–aspartate 158 are compositionally biased toward basic and acidic residues.

It belongs to the SmpB family.

It localises to the cytoplasm. Functionally, required for rescue of stalled ribosomes mediated by trans-translation. Binds to transfer-messenger RNA (tmRNA), required for stable association of tmRNA with ribosomes. tmRNA and SmpB together mimic tRNA shape, replacing the anticodon stem-loop with SmpB. tmRNA is encoded by the ssrA gene; the 2 termini fold to resemble tRNA(Ala) and it encodes a 'tag peptide', a short internal open reading frame. During trans-translation Ala-aminoacylated tmRNA acts like a tRNA, entering the A-site of stalled ribosomes, displacing the stalled mRNA. The ribosome then switches to translate the ORF on the tmRNA; the nascent peptide is terminated with the 'tag peptide' encoded by the tmRNA and targeted for degradation. The ribosome is freed to recommence translation, which seems to be the essential function of trans-translation. This is SsrA-binding protein from Psychrobacter arcticus (strain DSM 17307 / VKM B-2377 / 273-4).